The sequence spans 367 residues: Embryonic developmental protein tofu-6 (367 aa).

Residues 13 to 92 (AGFHIRNIPK…FTLKVTDHKN (80 aa)) form the RRM domain. Residues 298–345 (KSILADRLQRKGVCEYLPRSQQPHYAYSRETLLQHNNSGVTAQISNDA) form a required for ife-3 interaction region.

In terms of assembly, component of the pid-1 variant of the PETISCO complex (also called the pid-3, erh-2, tofu-6, and ife-3 small RNA complex) containing at least pid-1, tofu-6, ife-3, pid-3, and erh-2, which is required for the biogenesis of 21 nucleotide PIWI-interacting RNAs (piRNAs) that possess a uracil residue at the 5'-end (also called 21U-RNAs). Within the pid-1 variant of the PETISCO complex interacts with pid-1. Component of the tost-1 variant of the PETISCO complex (also called the pid-3, erh-2, tofu-6, and ife-3 small RNA complex) containing at least tost-1, tofu-6, ife-3, pid-3, and erh-2, which plays an essential role in embryogenesis. Within the tost-1 variant of the PETISCO complex interacts with tost-1. Within the pid-1 and tost-1 variants of the PETISCO complexes interacts (via C-terminus) with ife-3. Within the pid-1 and tost-1 variants of the PETISCO complexes interacts (via the RRM domain) with pid-3. Within the pid-1 and tost-1 variants of the PETISCO complexes interacts (via the RRM domain) with erh-2. In contrast to the pid-1 variant of the PETISCO complex, the tost-1 variant of the PETISCO complex plays a minor role in the biogenesis of 21U-RNAs. Interacts (via residues 120-314) with the PUCH complex subunit tofu-1 (via residues 82-172); the interaction between the PETISCO and PUCH complex members enhances piRNA production in vivo. In terms of tissue distribution, expression is restricted to the germline (at protein level).

It localises to the cytoplasm. The protein resides in the perinuclear region. Its subcellular location is the nucleus. Its function is as follows. Component of the pid-1 and tost-1 variants of the PETISCO complexes, which have roles in the biogenesis of a class of 21 nucleotide PIWI-interacting RNAs (piRNAs) that possess a uracil residue at the 5'-end (also called 21U-RNAs) and embryogenesis, respectively. Promotes the biogenesis of 21U-RNAs. Mediates the interaction between the PETISCO complex and the PUCH complex, the endoribonuclease complex processing the 5'-end of precursor piRNAs, thereby enhancing mature piRNA production. Required for chromosome segregation and cell division in early embryos. May have a role in DNA replication. This chain is Embryonic developmental protein tofu-6, found in Caenorhabditis elegans.